Reading from the N-terminus, the 739-residue chain is Ankyrin repeat and SAM domain-containing protein 6 (739 aa).

ANK repeat units lie at residues 1–30 (MGAS…FVDD), 57–86 (LEVR…DARV), 91–120 (TGWS…DPDH), 124–156 (LGNT…RPDD), 158–188 (KKRP…QVDV), 192–221 (DGAS…DVDR), 226–255 (HGWT…DVQL), and 259–290 (NGYT…LVDK). Residues 295–305 (QRGKSALRRRA) are compositionally biased toward basic residues. 2 disordered regions span residues 295-320 (QRGK…TGLK) and 449-645 (LRDA…ITDE). Residues 462 to 478 (PGRSSAGSDTASISRVV) show a composition bias toward polar residues. Low complexity-rich tracts occupy residues 490 to 506 (GPSP…HSSG) and 582 to 592 (SSRSKSTSPTL). The span at 593–603 (TPSPSPTPAHT) shows a compositional bias: pro residues. Over residues 604 to 641 (PAPAHTPAHRPTGASADSQGSASTQQRSRSSGGSSSGT) the composition is skewed to low complexity. An SAM domain is found at 643-706 (TDEDELSGIL…LAAISELNAG (64 aa)).

It is found in the cell projection. It localises to the cilium. Its function is as follows. Required for renal function. The sequence is that of Ankyrin repeat and SAM domain-containing protein 6 (anks6) from Danio rerio (Zebrafish).